The primary structure comprises 193 residues: Chaperone protein TorD (193 aa).

Belongs to the TorD/DmsD family. TorD subfamily.

Its subcellular location is the cytoplasm. Its function is as follows. Involved in the biogenesis of TorA. Acts on TorA before the insertion of the molybdenum cofactor and, as a result, probably favors a conformation of the apoenzyme that is competent for acquiring the cofactor. The protein is Chaperone protein TorD of Actinobacillus succinogenes (strain ATCC 55618 / DSM 22257 / CCUG 43843 / 130Z).